Reading from the N-terminus, the 226-residue chain is uncharacterized protein (226 aa).

The protein to L.innocua lin1255, lin1742 and lin2408.

This is an uncharacterized protein from Listeria innocua serovar 6a (strain ATCC BAA-680 / CLIP 11262).